Consider the following 177-residue polypeptide: Large ribosomal subunit protein bL17 (177 aa).

A disordered region spans residues 136 to 177; the sequence is AEEEAPAVEAEATEAVEAPVEETAAAEAEAPAEEAADAEKAE. The segment covering 138–149 has biased composition (acidic residues); it reads EEAPAVEAEATE. Low complexity predominate over residues 150-164; sequence AVEAPVEETAAAEAE.

It belongs to the bacterial ribosomal protein bL17 family. As to quaternary structure, part of the 50S ribosomal subunit. Contacts protein L32.

The sequence is that of Large ribosomal subunit protein bL17 from Bifidobacterium longum (strain NCC 2705).